We begin with the raw amino-acid sequence, 230 residues long: Prepilin leader peptidase/N-methyltransferase (230 aa).

7 helical membrane passes run 1-21 (MIYF…WFYL), 60-80 (GHIL…QIAF), 84-104 (IFTV…YLDW), 114-134 (CLWL…LLTL), 140-160 (SAAS…FYYG), 181-201 (LETL…FSLI), and 208-228 (FLPF…VKYY).

Belongs to the peptidase A24 family.

The protein localises to the cell inner membrane. The catalysed reaction is Typically cleaves a -Gly-|-Phe- bond to release an N-terminal, basic peptide of 5-8 residues from type IV prepilin, and then N-methylates the new N-terminal amino group, the methyl donor being S-adenosyl-L-methionine.. Plays a role in type II pseudopili formation by proteolytically removing the leader sequence from substrate proteins and subsequently monomethylating the alpha-amino group of the newly exposed N-terminal phenylalanine. Substrates include proteins required for biogenesis of the type II general secretory apparatus. This Haemophilus influenzae (strain ATCC 51907 / DSM 11121 / KW20 / Rd) protein is Prepilin leader peptidase/N-methyltransferase (hofD).